Reading from the N-terminus, the 511-residue chain is Centrosomal protein CCDC61 (511 aa).

Residues Met1–Pro144 are head domain. A coiled-coil region spans residues Ala147–Ala272. Disordered regions lie at residues Thr306 to Pro403 and Arg447 to Thr486. Residues Gly315–Asp335 show a composition bias toward basic and acidic residues. Over residues Gly338–Gly352 the composition is skewed to polar residues. Residues Asp366–Ser378 are compositionally biased toward basic and acidic residues.

Belongs to the CCDC61 family. In terms of assembly, forms homodimers (via head domain).

It localises to the cytoplasm. The protein resides in the cytoskeleton. It is found in the microtubule organizing center. The protein localises to the centrosome. Its subcellular location is the centriolar satellite. It localises to the cilium basal body. Its function is as follows. Microtubule-binding centrosomal protein required for centriole cohesion, independently of the centrosome-associated protein/CEP250 and rootletin/CROCC linker. In interphase, required for anchoring microtubule at the mother centriole subdistal appendages and for centrosome positioning. During mitosis, may be involved in spindle assembly and chromatin alignment by regulating the organization of spindle microtubules into a symmetrical structure. Plays a non-essential role in ciliogenesis. The protein is Centrosomal protein CCDC61 of Danio rerio (Zebrafish).